The chain runs to 388 residues: Glutamate 5-kinase (388 aa).

Lys21 provides a ligand contact to ATP. Residues Ser61, Asp148, and Asn160 each coordinate substrate. ATP is bound by residues 180-181 and 222-228; these read TD and TGGMITK. Positions 285 to 363 constitute a PUA domain; the sequence is RGSVFLDPGA…RWLARELGAE (79 aa).

The protein belongs to the glutamate 5-kinase family.

Its subcellular location is the cytoplasm. The enzyme catalyses L-glutamate + ATP = L-glutamyl 5-phosphate + ADP. The protein operates within amino-acid biosynthesis; L-proline biosynthesis; L-glutamate 5-semialdehyde from L-glutamate: step 1/2. In terms of biological role, catalyzes the transfer of a phosphate group to glutamate to form L-glutamate 5-phosphate. In Thermobifida fusca (strain YX), this protein is Glutamate 5-kinase.